The following is a 284-amino-acid chain: Diaminopimelate epimerase (284 aa).

Residues asparagine 20, glutamine 53, and asparagine 73 each coordinate substrate. Catalysis depends on cysteine 82, which acts as the Proton donor. Residues 83-84 (GN), asparagine 167, asparagine 200, and 218-219 (ER) contribute to the substrate site. Cysteine 227 acts as the Proton acceptor in catalysis. Substrate is bound at residue 228–229 (GS).

The protein belongs to the diaminopimelate epimerase family. As to quaternary structure, homodimer.

The protein localises to the cytoplasm. It carries out the reaction (2S,6S)-2,6-diaminopimelate = meso-2,6-diaminopimelate. It functions in the pathway amino-acid biosynthesis; L-lysine biosynthesis via DAP pathway; DL-2,6-diaminopimelate from LL-2,6-diaminopimelate: step 1/1. Its function is as follows. Catalyzes the stereoinversion of LL-2,6-diaminopimelate (L,L-DAP) to meso-diaminopimelate (meso-DAP), a precursor of L-lysine and an essential component of the bacterial peptidoglycan. This is Diaminopimelate epimerase from Xanthomonas axonopodis pv. citri (strain 306).